A 236-amino-acid polypeptide reads, in one-letter code: Putative N-acetylmannosamine-6-phosphate 2-epimerase (236 aa).

It belongs to the NanE family.

It catalyses the reaction an N-acyl-D-glucosamine 6-phosphate = an N-acyl-D-mannosamine 6-phosphate. It participates in amino-sugar metabolism; N-acetylneuraminate degradation; D-fructose 6-phosphate from N-acetylneuraminate: step 3/5. Converts N-acetylmannosamine-6-phosphate (ManNAc-6-P) to N-acetylglucosamine-6-phosphate (GlcNAc-6-P). The protein is Putative N-acetylmannosamine-6-phosphate 2-epimerase of Listeria welshimeri serovar 6b (strain ATCC 35897 / DSM 20650 / CCUG 15529 / CIP 8149 / NCTC 11857 / SLCC 5334 / V8).